The primary structure comprises 885 residues: Alanine--tRNA ligase (885 aa).

Zn(2+)-binding residues include histidine 571, histidine 575, cysteine 674, and histidine 678.

It belongs to the class-II aminoacyl-tRNA synthetase family. Requires Zn(2+) as cofactor.

It localises to the cytoplasm. The catalysed reaction is tRNA(Ala) + L-alanine + ATP = L-alanyl-tRNA(Ala) + AMP + diphosphate. Its function is as follows. Catalyzes the attachment of alanine to tRNA(Ala) in a two-step reaction: alanine is first activated by ATP to form Ala-AMP and then transferred to the acceptor end of tRNA(Ala). Also edits incorrectly charged Ser-tRNA(Ala) and Gly-tRNA(Ala) via its editing domain. The sequence is that of Alanine--tRNA ligase from Clavibacter michiganensis subsp. michiganensis (strain NCPPB 382).